The primary structure comprises 462 residues: Gamma-glutamylethanolamide synthetase GlnA4 (462 aa).

The region spanning 30–126 (GDIDTVVLAF…AVADLAWEDG (97 aa)) is the GS beta-grasp domain. In terms of domain architecture, GS catalytic spans 133–462 (PRQILRRQLE…WELRRSFERM (330 aa)). Mg(2+) contacts are provided by Glu156 and Glu158. Glu214 is an ATP binding site. Residues Glu219 and Glu226 each coordinate Mg(2+). Gly270 contributes to the L-glutamate binding site. His274 contributes to the Mg(2+) binding site. 276 to 278 (HLS) contributes to the ATP binding site. L-glutamate-binding residues include Arg325 and Arg343. Residues Arg343 and Arg348 each contribute to the ATP site. A Mg(2+)-binding site is contributed by Glu359. Arg361 is an L-glutamate binding site.

Belongs to the glutamine synthetase family. Mg(2+) serves as cofactor.

It carries out the reaction ethanolamine + L-glutamate + ATP = gamma-L-glutamylethanolamide + ADP + phosphate + H(+). Its pathway is amine and polyamine degradation; ethanolamine degradation. Its activity is regulated as follows. Very slightly decreased activity with glutamine synthetase (GS) inhibitor methionine sulfoximine (MSO). In terms of biological role, involved in the catabolism of monoamine ethanolamine. Catalyzes the ATP-dependent gamma-glutamylation of ethanolamine. No activity with polyamines. No complementation of the L-glutamine auxotrophy of an E.coli glnA mutant. Enables survival of S.coelicolor under high local environmental ethanolamine conditions. May play a role during starvation conditions to limit intracellular ethanolamine concentration, which in excess is toxic to the cells. This Streptomyces coelicolor (strain ATCC BAA-471 / A3(2) / M145) protein is Gamma-glutamylethanolamide synthetase GlnA4.